A 257-amino-acid polypeptide reads, in one-letter code: Zinc transporter ZupT (257 aa).

8 helical membrane passes run 5 to 25 (LILT…GVLG), 32 to 52 (VLAF…LMEM), 61 to 81 (GMSP…YFGL), 109 to 129 (AILL…ATFV), 137 to 157 (LGFG…LAVA), 171 to 191 (IFWA…AWLI), 195 to 215 (LVSP…MVAL), and 236 to 256 (GVLC…TIGI). N120 and E123 together coordinate Fe(2+). The Zn(2+) site is built by E123 and H148. Residues N149, E152, and E181 each contribute to the Fe(2+) site. E152 lines the Zn(2+) pocket.

This sequence belongs to the ZIP transporter (TC 2.A.5) family. ZupT subfamily.

The protein resides in the cell inner membrane. It catalyses the reaction Zn(2+)(in) = Zn(2+)(out). Its function is as follows. Mediates zinc uptake. May also transport other divalent cations. The polypeptide is Zinc transporter ZupT (Salmonella agona (strain SL483)).